Consider the following 423-residue polypeptide: Putative galacturan 1,4-alpha-galacturonidase C (423 aa).

The first 20 residues, Met1–Ala20, serve as a signal peptide directing secretion. 5 N-linked (GlcNAc...) asparagine glycosylation sites follow: Asn100, Asn120, Asn150, Asn173, and Asn185. Asp229 acts as the Proton donor in catalysis. Cys231 and Cys248 are joined by a disulfide. Asn245 carries an N-linked (GlcNAc...) asparagine glycan. Asn252 is a catalytic residue. Residues Asn344 and Asn362 are each glycosylated (N-linked (GlcNAc...) asparagine). A disulfide bond links Cys379 and Cys385. Asn400 carries N-linked (GlcNAc...) asparagine glycosylation. A disulfide bridge links Cys409 with Cys423.

This sequence belongs to the glycosyl hydrolase 28 family.

The protein resides in the secreted. It catalyses the reaction [(1-&gt;4)-alpha-D-galacturonosyl](n) + H2O = alpha-D-galacturonate + [(1-&gt;4)-alpha-D-galacturonosyl](n-1). In terms of biological role, specific in hydrolyzing the terminal glycosidic bond of polygalacturonic acid and oligogalacturonates. The sequence is that of Putative galacturan 1,4-alpha-galacturonidase C (rgxC) from Neosartorya fischeri (strain ATCC 1020 / DSM 3700 / CBS 544.65 / FGSC A1164 / JCM 1740 / NRRL 181 / WB 181) (Aspergillus fischerianus).